We begin with the raw amino-acid sequence, 1755 residues long: Transposon Ty1-ML1 Gag-Pol polyprotein (1755 aa).

3 stretches are compositionally biased toward polar residues: residues 1 to 23, 48 to 60, and 127 to 152; these read MESQ…SVTS, TKAN…TPAS, and QSQF…GNTF. 3 disordered regions span residues 1-88, 126-173, and 352-421; these read MESQ…YPQQ, PQSQ…RPPP, and GSRN…SKST. Residues 153 to 165 are compositionally biased toward low complexity; sequence TDSSSADSDMTST. An RNA-binding region spans residues 299–401; it reads NNGIHINNKV…NSKSKTARAH (103 aa). Residues 402–418 are compositionally biased toward low complexity; it reads NVSTSNNSPSTDNDSIS. Aspartate 461 serves as the catalytic For protease activity; shared with dimeric partner. Residues 583–640 form an integrase-type zinc finger-like region; it reads NVHTSESTRKYPYPFIHRMLAHANAQTIRYSLKNNTITYFNESDVDWSSAIDYQCPDC. Residues 660-835 enclose the Integrase catalytic domain; it reads NSYEPFQYLH…AGLDISTLLP (176 aa). Residues aspartate 671 and aspartate 736 each coordinate Mg(2+). 3 disordered regions span residues 956 to 1087, 1092 to 1111, and 1130 to 1171; these read SKAV…ETEK, RSPS…NIVP, and DLPL…DSNA. A compositionally biased stretch (low complexity) spans 960-969; the sequence is SPTDSTPPST. Over residues 1005–1015 the composition is skewed to polar residues; that stretch reads STPQISNIEST. Residues 1038-1053 show a composition bias toward basic and acidic residues; it reads ESSHASKSKDFRHSDS. 2 stretches are compositionally biased toward polar residues: residues 1054-1082 and 1101-1111; these read YSEN…QISD and PENNSSHNIVP. Residues 1178–1212 carry the Bipartite nuclear localization signal motif; that stretch reads KKRSLEDNETEIKVSRDTWNTKNMRSLEPPRSKKR. In terms of domain architecture, Reverse transcriptase Ty1/copia-type spans 1338 to 1476; that stretch reads NNYYITQLDI…DILGLEIKYQ (139 aa). Aspartate 1346, aspartate 1427, aspartate 1428, aspartate 1610, glutamate 1652, and aspartate 1685 together coordinate Mg(2+). The region spanning 1610–1752 is the RNase H Ty1/copia-type domain; it reads DASYGNQPYY…IKTFKLLTNK (143 aa).

As to quaternary structure, the capsid protein forms a homotrimer, from which the VLPs are assembled. The protease is a homodimer, whose active site consists of two apposed aspartic acid residues. Initially, virus-like particles (VLPs) are composed of the structural unprocessed proteins Gag and Gag-Pol, and also contain the host initiator methionine tRNA (tRNA(i)-Met) which serves as a primer for minus-strand DNA synthesis, and a dimer of genomic Ty RNA. Processing of the polyproteins occurs within the particle and proceeds by an ordered pathway, called maturation. First, the protease (PR) is released by autocatalytic cleavage of the Gag-Pol polyprotein yielding capsid protein p45 and a Pol-p154 precursor protein. This cleavage is a prerequisite for subsequent processing of Pol-p154 at the remaining sites to release the mature structural and catalytic proteins. Maturation takes place prior to the RT reaction and is required to produce transposition-competent VLPs.

The protein resides in the cytoplasm. Its subcellular location is the nucleus. It carries out the reaction DNA(n) + a 2'-deoxyribonucleoside 5'-triphosphate = DNA(n+1) + diphosphate. The enzyme catalyses Endonucleolytic cleavage to 5'-phosphomonoester.. Capsid protein (CA) is the structural component of the virus-like particle (VLP), forming the shell that encapsulates the retrotransposons dimeric RNA genome. The particles are assembled from trimer-clustered units and there are holes in the capsid shells that allow for the diffusion of macromolecules. CA also has nucleocapsid-like chaperone activity, promoting primer tRNA(i)-Met annealing to the multipartite primer-binding site (PBS), dimerization of Ty1 RNA and initiation of reverse transcription. Functionally, the aspartyl protease (PR) mediates the proteolytic cleavages of the Gag and Gag-Pol polyproteins after assembly of the VLP. Its function is as follows. Reverse transcriptase/ribonuclease H (RT) is a multifunctional enzyme that catalyzes the conversion of the retro-elements RNA genome into dsDNA within the VLP. The enzyme displays a DNA polymerase activity that can copy either DNA or RNA templates, and a ribonuclease H (RNase H) activity that cleaves the RNA strand of RNA-DNA heteroduplexes during plus-strand synthesis and hydrolyzes RNA primers. The conversion leads to a linear dsDNA copy of the retrotransposon that includes long terminal repeats (LTRs) at both ends. In terms of biological role, integrase (IN) targets the VLP to the nucleus, where a subparticle preintegration complex (PIC) containing at least integrase and the newly synthesized dsDNA copy of the retrotransposon must transit the nuclear membrane. Once in the nucleus, integrase performs the integration of the dsDNA into the host genome. This chain is Transposon Ty1-ML1 Gag-Pol polyprotein (TY1B-ML1), found in Saccharomyces cerevisiae (strain ATCC 204508 / S288c) (Baker's yeast).